A 188-amino-acid polypeptide reads, in one-letter code: Methylated-DNA--protein-cysteine methyltransferase (188 aa).

Positions 120, 121, and 134 each coordinate DNA. Cys-151 functions as the Nucleophile; methyl group acceptor in the catalytic mechanism. A DNA-binding site is contributed by Ser-157.

It belongs to the MGMT family.

It localises to the nucleus. The enzyme catalyses a 6-O-methyl-2'-deoxyguanosine in DNA + L-cysteinyl-[protein] = S-methyl-L-cysteinyl-[protein] + a 2'-deoxyguanosine in DNA. It catalyses the reaction a 4-O-methyl-thymidine in DNA + L-cysteinyl-[protein] = a thymidine in DNA + S-methyl-L-cysteinyl-[protein]. In terms of biological role, involved in the cellular defense against the biological effects of O6-methylguanine (O6-MeG) and O4-methylthymine (O4-MeT) in DNA. Repairs the methylated nucleobase in DNA by stoichiometrically transferring the methyl group to a cysteine residue in the enzyme. This is a suicide reaction: the enzyme is irreversibly inactivated. Prefers double-stranded DNA over single-stranded DNA as substrate. This is Methylated-DNA--protein-cysteine methyltransferase (MGT1) from Saccharomyces cerevisiae (strain YJM789) (Baker's yeast).